We begin with the raw amino-acid sequence, 802 residues long: Oligophrenin-1 (802 aa).

The PH domain maps to 265 to 368 (QPTIEGYLYT…WMEAMDGKEP (104 aa)). A Rho-GAP domain is found at 380-564 (MELNEVGFKF…ILIEHFGKIY (185 aa)). 3 disordered regions span residues 569–589 (EESA…HKPI), 607–770 (LDES…NAGE), and 783–802 (FETA…GDES). The segment covering 616–627 (HQTPNGTITSSI) has biased composition (polar residues). Positions 716–732 (HHKEGDADSFSKVRPPG) are enriched in basic and acidic residues.

As to quaternary structure, interacts with HOMER1. Interacts with AMPA receptor complexes. Interacts with SH3GL2 (endophilin-A1). Interacts (via C-terminus) with NR1D1.

It localises to the postsynapse. The protein resides in the presynapse. It is found in the cell projection. The protein localises to the axon. Its subcellular location is the dendritic spine. It localises to the dendrite. The protein resides in the cytoplasm. Stimulates GTP hydrolysis of members of the Rho family. Its action on RHOA activity and signaling is implicated in growth and stabilization of dendritic spines, and therefore in synaptic function. Critical for the stabilization of AMPA receptors at postsynaptic sites. Critical for the regulation of synaptic vesicle endocytosis at pre-synaptic terminals. Required for the localization of NR1D1 to dendrites, can suppress its repressor activity and protect it from proteasomal degradation. The chain is Oligophrenin-1 (OPHN1) from Pan troglodytes (Chimpanzee).